Reading from the N-terminus, the 88-residue chain is MSAPTSIPALDEASKKELESFLEQEQAKAKLQASIHELTNTCWNTCITGGISSKFSKSEAQCLENCVDRFLDSSLYIVRQIEAQKQQI.

The Twin CX3C motif motif lies at 42–66 (CWNTCITGGISSKFSKSEAQCLENC). 2 disulfides stabilise this stretch: cysteine 42/cysteine 66 and cysteine 46/cysteine 62.

It belongs to the small Tim family. In terms of assembly, heterohexamer; composed of 3 copies of TIM8 and 3 copies of TIM13, named soluble 70 kDa complex. Associates with the TIM22 complex, whose core is composed of TIM22 and TIM54. Interacts with the transmembrane regions of multi-pass transmembrane proteins in transit.

The protein localises to the mitochondrion inner membrane. Functionally, mitochondrial intermembrane chaperone that participates in the import and insertion of some multi-pass transmembrane proteins into the mitochondrial inner membrane. Also required for the transfer of beta-barrel precursors from the TOM complex to the sorting and assembly machinery (SAM complex) of the outer membrane. Acts as a chaperone-like protein that protects the hydrophobic precursors from aggregation and guide them through the mitochondrial intermembrane space. The TIM8-TIM13 complex is non essential and only mediates the import of few proteins, while the predominant TIM9-TIM10 70 kDa complex is crucial and mediates the import of much more proteins. This chain is Mitochondrial import inner membrane translocase subunit TIM8 (TIM8), found in Cryptococcus neoformans var. neoformans serotype D (strain B-3501A) (Filobasidiella neoformans).